Here is a 119-residue protein sequence, read N- to C-terminus: DNA-binding protein inhibitor ID-3 (119 aa).

One can recognise a bHLH domain in the interval 28–80 (RGKSPAAEEPLSLLDDMNHCYSRLRELVPGVPRGTQLSQVEILQRVIDYILDL).

In terms of assembly, homodimer, and heterodimer with other HLH proteins. Interacts with COPS5 and COPS7A. Interacts with IFI204. Interacts with GATA4 and NKX2-5. Interacts with ANKRD2; both proteins cooperate in myoblast differentiation. Interacts with CLOCK and BMAL1.

The protein localises to the nucleus. In terms of biological role, transcriptional regulator (lacking a basic DNA binding domain) which negatively regulates the basic helix-loop-helix (bHLH) transcription factors by forming heterodimers and inhibiting their DNA binding and transcriptional activity. Implicated in regulating a variety of cellular processes, including cellular growth, senescence, differentiation, apoptosis, angiogenesis, and neoplastic transformation. Involved in myogenesis by inhibiting skeletal muscle and cardiac myocyte differentiation and promoting muscle precursor cells proliferation. Inhibits the binding of E2A-containing protein complexes to muscle creatine kinase E-box enhancer. Regulates the circadian clock by repressing the transcriptional activator activity of the CLOCK-BMAL1 heterodimer. This chain is DNA-binding protein inhibitor ID-3 (ID3), found in Bos taurus (Bovine).